A 448-amino-acid polypeptide reads, in one-letter code: Chaperone SurA (448 aa).

Positions Met-1–Ala-27 are cleaved as a signal peptide. 2 consecutive PpiC domains span residues Gln-185 to Asp-288 and Ile-301 to Gly-399. Residues Leu-230 to Lys-249 form a disordered region.

Its subcellular location is the periplasm. The catalysed reaction is [protein]-peptidylproline (omega=180) = [protein]-peptidylproline (omega=0). Functionally, chaperone involved in the correct folding and assembly of outer membrane proteins. Recognizes specific patterns of aromatic residues and the orientation of their side chains, which are found more frequently in integral outer membrane proteins. May act in both early periplasmic and late outer membrane-associated steps of protein maturation. This Burkholderia thailandensis (strain ATCC 700388 / DSM 13276 / CCUG 48851 / CIP 106301 / E264) protein is Chaperone SurA.